Here is a 62-residue protein sequence, read N- to C-terminus: Large ribosomal subunit protein bL28 (62 aa).

The protein belongs to the bacterial ribosomal protein bL28 family.

This chain is Large ribosomal subunit protein bL28, found in Parafrankia sp. (strain EAN1pec).